A 299-amino-acid chain; its full sequence is Bifunctional protein FolD 1 (299 aa).

Residues 168 to 170 (GRS), serine 193, and isoleucine 234 each bind NADP(+).

This sequence belongs to the tetrahydrofolate dehydrogenase/cyclohydrolase family. In terms of assembly, homodimer.

The catalysed reaction is (6R)-5,10-methylene-5,6,7,8-tetrahydrofolate + NADP(+) = (6R)-5,10-methenyltetrahydrofolate + NADPH. It carries out the reaction (6R)-5,10-methenyltetrahydrofolate + H2O = (6R)-10-formyltetrahydrofolate + H(+). It functions in the pathway one-carbon metabolism; tetrahydrofolate interconversion. Functionally, catalyzes the oxidation of 5,10-methylenetetrahydrofolate to 5,10-methenyltetrahydrofolate and then the hydrolysis of 5,10-methenyltetrahydrofolate to 10-formyltetrahydrofolate. The chain is Bifunctional protein FolD 1 from Mesorhizobium japonicum (strain LMG 29417 / CECT 9101 / MAFF 303099) (Mesorhizobium loti (strain MAFF 303099)).